The primary structure comprises 734 residues: Photosystem I P700 chlorophyll a apoprotein A2 (734 aa).

Transmembrane regions (helical) follow at residues 46 to 69 (IFAS…FHVA), 135 to 158 (LYTG…LHLQ), 175 to 199 (LNHH…HVAI), 273 to 291 (MAHH…GHMY), 330 to 353 (IHFQ…QHMY), 369 to 395 (AALY…IFFI), 417 to 439 (AIIS…LYVH), and 517 to 535 (FLVH…LILV). Residues Cys-559 and Cys-568 each contribute to the [4Fe-4S] cluster site. The next 2 helical transmembrane spans lie at 575–596 (AFYL…YWHW) and 643–665 (LSVW…MFLI). 3 residues coordinate chlorophyll a: His-654, Met-662, and Tyr-670. Phylloquinone is bound at residue Trp-671. The chain crosses the membrane as a helical span at residues 707–727 (LVGLAHFSVGYIFTYAAFLIA).

The protein belongs to the PsaA/PsaB family. In terms of assembly, the PsaA/B heterodimer binds the P700 chlorophyll special pair and subsequent electron acceptors. PSI consists of a core antenna complex that captures photons, and an electron transfer chain that converts photonic excitation into a charge separation. The eukaryotic PSI reaction center is composed of at least 11 subunits. P700 is a chlorophyll a/chlorophyll a' dimer, A0 is one or more chlorophyll a, A1 is one or both phylloquinones and FX is a shared 4Fe-4S iron-sulfur center. serves as cofactor.

The protein localises to the plastid. It localises to the chloroplast thylakoid membrane. The catalysed reaction is reduced [plastocyanin] + hnu + oxidized [2Fe-2S]-[ferredoxin] = oxidized [plastocyanin] + reduced [2Fe-2S]-[ferredoxin]. Functionally, psaA and PsaB bind P700, the primary electron donor of photosystem I (PSI), as well as the electron acceptors A0, A1 and FX. PSI is a plastocyanin-ferredoxin oxidoreductase, converting photonic excitation into a charge separation, which transfers an electron from the donor P700 chlorophyll pair to the spectroscopically characterized acceptors A0, A1, FX, FA and FB in turn. Oxidized P700 is reduced on the lumenal side of the thylakoid membrane by plastocyanin. This is Photosystem I P700 chlorophyll a apoprotein A2 from Hordeum vulgare (Barley).